We begin with the raw amino-acid sequence, 189 residues long: dCTP deaminase, dUMP-forming (189 aa).

DCTP is bound by residues 101–106 (KSSLGR), D119, 127–129 (TLE), Q148, Y162, and Q174. E129 functions as the Proton donor/acceptor in the catalytic mechanism. The segment at 166–189 (AVGSKYQGQRGPTPSRSHLNFIKS) is disordered. Residues 171 to 189 (YQGQRGPTPSRSHLNFIKS) are compositionally biased toward polar residues.

It belongs to the dCTP deaminase family. Homotrimer.

It carries out the reaction dCTP + 2 H2O = dUMP + NH4(+) + diphosphate. The protein operates within pyrimidine metabolism; dUMP biosynthesis; dUMP from dCTP: step 1/1. Functionally, bifunctional enzyme that catalyzes both the deamination of dCTP to dUTP and the hydrolysis of dUTP to dUMP without releasing the toxic dUTP intermediate. The chain is dCTP deaminase, dUMP-forming from Mycolicibacterium smegmatis (strain ATCC 700084 / mc(2)155) (Mycobacterium smegmatis).